A 122-amino-acid polypeptide reads, in one-letter code: Large ribosomal subunit protein uL14c (122 aa).

Belongs to the universal ribosomal protein uL14 family. In terms of assembly, part of the 50S ribosomal subunit.

It is found in the plastid. Its subcellular location is the chloroplast. Binds to 23S rRNA. The polypeptide is Large ribosomal subunit protein uL14c (Liriodendron tulipifera (Tuliptree)).